The following is a 264-amino-acid chain: 2-C-methyl-D-erythritol 4-phosphate cytidylyltransferase (264 aa).

The segment at 234 to 264 (ARDPESAHPQSSVLASAFSGPGSRVSGPEEI) is disordered.

It belongs to the IspD/TarI cytidylyltransferase family. IspD subfamily.

It carries out the reaction 2-C-methyl-D-erythritol 4-phosphate + CTP + H(+) = 4-CDP-2-C-methyl-D-erythritol + diphosphate. It participates in isoprenoid biosynthesis; isopentenyl diphosphate biosynthesis via DXP pathway; isopentenyl diphosphate from 1-deoxy-D-xylulose 5-phosphate: step 2/6. Its function is as follows. Catalyzes the formation of 4-diphosphocytidyl-2-C-methyl-D-erythritol from CTP and 2-C-methyl-D-erythritol 4-phosphate (MEP). The polypeptide is 2-C-methyl-D-erythritol 4-phosphate cytidylyltransferase (Xanthomonas euvesicatoria pv. vesicatoria (strain 85-10) (Xanthomonas campestris pv. vesicatoria)).